Reading from the N-terminus, the 100-residue chain is Integration host factor subunit alpha (100 aa).

The protein belongs to the bacterial histone-like protein family. In terms of assembly, heterodimer of an alpha and a beta chain.

Functionally, this protein is one of the two subunits of integration host factor, a specific DNA-binding protein that functions in genetic recombination as well as in transcriptional and translational control. This is Integration host factor subunit alpha from Hahella chejuensis (strain KCTC 2396).